Here is a 296-residue protein sequence, read N- to C-terminus: Small ribosomal subunit protein uS2m (296 aa).

Positions 274-296 (QGQKEPGDQGPAHPPGADMSHSL) are disordered.

This sequence belongs to the universal ribosomal protein uS2 family. Component of the mitochondrial small ribosomal subunit (mt-SSU). Mature mammalian 55S mitochondrial ribosomes consist of a small (28S) and a large (39S) subunit. The 28S small subunit contains a 12S ribosomal RNA (12S mt-rRNA) and 30 different proteins. The 39S large subunit contains a 16S rRNA (16S mt-rRNA), a copy of mitochondrial valine transfer RNA (mt-tRNA(Val)), which plays an integral structural role, and 52 different proteins.

The protein resides in the mitochondrion. Its function is as follows. Required for mitoribosome formation and stability, and mitochondrial translation. The protein is Small ribosomal subunit protein uS2m (MRPS2) of Homo sapiens (Human).